The following is an 887-amino-acid chain: MGEAEKFHYIYSCDLDINVQLKIGSLEGKREQKSYKAVLEDPMLKFSGLYQETCSDLYVTCQVFAEGKPLALPVRTSYKAFSTRWNWNEWLKLPVKYPDLPRNAQVALTIWDVYGPGSAVPVGGTTVSLFGKYGMFRQGMHDLKVWPNVEADGSEPTRTPGRTSSTLSEDQMSRLAKLTKAHRQGHMVKVDWLDRLTFREIEMINESEKRSSNFMYLMVEFRCVKCDDKEYGIVYYEKDGDESSPILTSFELVKVPDPQMSMENLVESKHHKLARSLRSGPSDHDLKPNATTRDQLNIIVSYPPTKQLTYEEQDLVWKFRYYLTNQEKALTKFLKCVNWDLPQEAKQALELLGKWKPMDVEDSLELLSSHYTNPTVRRYAVARLRQADDEDLLMYLLQLVQALKYENFDDIKNGLEPTKKDSQTSASESLSNSGVSSGDIDSSQIITNPLPPVASPPPASKAKEVSDGENLEQDLCTFLISRACKNSTLANYLYWYVIVECEDQDTQQRDPKTHEMYLNVMRRFSQALLKGDKSVRVMRSLLAAQQTFVDRLVHLMKAVQRESGNRKKKNERLQALLGDNEKMNLSDVELIPLPLEPQVKIRGIIPETATLFKSALMPAQLFFKTEDGGKYPVIFKHGDDLRQDQLILQIISLMDKLLRKENLDLKLTPYKVLATSTKHGFMQFIQSVPVAEVLDTEGSIQNFFRKYAPSETGPYGISAEVMDTYVKSCAGYCVITYILGVGDRHLDNLLLTKTGKLFHIDFGYILGRDPKPLPPPMKLNKEMVEGMGGTQSEQYQEFRKQCYTAFLHLRRYSNLILNLFSLMVDANIPDIALEPDKTVKKVQDKFRLDLSDEEAVHYMQSLIDESVHALFAAVVEQIHKFAQYWRK.

Positions tyrosine 35–glutamine 184 constitute a C2 PI3K-type domain. The interval valine 149–aspartate 170 is disordered. The span at proline 156 to aspartate 170 shows a compositional bias: polar residues. A Phosphothreonine; by AMPK modification is found at threonine 163. The residue at position 165 (serine 165) is a Phosphoserine; by AMPK. Serine 244, serine 261, and serine 282 each carry phosphoserine. The PIK helical domain maps to aspartate 283 to valine 520. The tract at residues leucine 415–serine 466 is disordered. Residues serine 425–serine 437 are compositionally biased toward low complexity. The span at proline 449–alanine 459 shows a compositional bias: pro residues. The 267-residue stretch at isoleucine 605–phenylalanine 871 folds into the PI3K/PI4K catalytic domain. A G-loop region spans residues leucine 611 to methionine 617. A catalytic loop region spans residues glycine 740–asparagine 748. The tract at residues histidine 759–asparagine 780 is activation loop.

Belongs to the PI3/PI4-kinase family. In terms of assembly, component of the PI3K (PI3KC3/PI3K-III/class III phosphatidylinositol 3-kinase) complex the core of which is composed of the catalytic subunit PIK3C3, the regulatory subunit PIK3R4 and BECN1 associating with additional regulatory/auxiliary subunits to form alternative complex forms. Alternative complex forms containing a fourth regulatory subunit in a mutually exclusive manner are: the PI3K complex I (PI3KC3-C1) containing ATG14, and the PI3K complex II (PI3KC3-C2) containing UVRAG. PI3KC3-C1 displays a V-shaped architecture with PIK3R4 serving as a bridge between PIK3C3 and the ATG14:BECN1 subcomplex. Both, PI3KC3-C1 and PI3KC3-C2, can associate with further regulatory subunits such as RUBCN, SH3GLB1/Bif-1 and AMBRA1. PI3KC3-C1 probably associates with PIK3CB. Interacts with RAB7A in the presence of PIK3R4. Interacts with AMBRA1. Interacts with BECN1P1/BECN2. Interacts with SLAMF1. May be a component of a complex composed of RAB5A (in GDP-bound form), DYN2 and PIK3C3. Interacts with NCKAP1L. Interacts with ATG14; this interaction is increased in the absence of TMEM39A. Interacts with STEEP1; the interaction is STING1-dependent and required for trafficking of STING1 from the endoplasmic reticulum. Interacts with YWHAG. Interacts with ARMC3. Mn(2+) serves as cofactor. In terms of processing, ubiquitinated via 'Lys-29'- and 'Lys-48'-linked ubiquitination by UBE3C, promoting its degradation. Deubiquitination by ZRANB1/TRABID promotes its stabilization, leading to autophagosome maturation.

It localises to the midbody. Its subcellular location is the late endosome. The protein resides in the cytoplasmic vesicle. It is found in the autophagosome. It carries out the reaction a 1,2-diacyl-sn-glycero-3-phospho-(1D-myo-inositol) + ATP = a 1,2-diacyl-sn-glycero-3-phospho-(1D-myo-inositol-3-phosphate) + ADP + H(+). Functionally, catalytic subunit of the PI3K complex that mediates formation of phosphatidylinositol 3-phosphate; different complex forms are believed to play a role in multiple membrane trafficking pathways: PI3KC3-C1 is involved in initiation of autophagosomes and PI3KC3-C2 in maturation of autophagosomes and endocytosis. As part of PI3KC3-C1, promotes endoplasmic reticulum membrane curvature formation prior to vesicle budding. Involved in regulation of degradative endocytic trafficking and required for the abscission step in cytokinesis, probably in the context of PI3KC3-C2. Involved in the transport of lysosomal enzyme precursors to lysosomes. Required for transport from early to late endosomes. In Mus musculus (Mouse), this protein is Phosphatidylinositol 3-kinase catalytic subunit type 3.